A 362-amino-acid polypeptide reads, in one-letter code: Histidinol-phosphate aminotransferase (362 aa).

Residue lysine 218 is modified to N6-(pyridoxal phosphate)lysine.

Belongs to the class-II pyridoxal-phosphate-dependent aminotransferase family. Histidinol-phosphate aminotransferase subfamily. As to quaternary structure, homodimer. The cofactor is pyridoxal 5'-phosphate.

The catalysed reaction is L-histidinol phosphate + 2-oxoglutarate = 3-(imidazol-4-yl)-2-oxopropyl phosphate + L-glutamate. Its pathway is amino-acid biosynthesis; L-histidine biosynthesis; L-histidine from 5-phospho-alpha-D-ribose 1-diphosphate: step 7/9. The sequence is that of Histidinol-phosphate aminotransferase from Xanthomonas campestris pv. campestris (strain ATCC 33913 / DSM 3586 / NCPPB 528 / LMG 568 / P 25).